The primary structure comprises 342 residues: N-acetyl-gamma-glutamyl-phosphate reductase (342 aa).

Cys-147 is an active-site residue.

The protein belongs to the NAGSA dehydrogenase family. Type 1 subfamily.

It is found in the cytoplasm. It catalyses the reaction N-acetyl-L-glutamate 5-semialdehyde + phosphate + NADP(+) = N-acetyl-L-glutamyl 5-phosphate + NADPH + H(+). It functions in the pathway amino-acid biosynthesis; L-arginine biosynthesis; N(2)-acetyl-L-ornithine from L-glutamate: step 3/4. Its function is as follows. Catalyzes the NADPH-dependent reduction of N-acetyl-5-glutamyl phosphate to yield N-acetyl-L-glutamate 5-semialdehyde. The chain is N-acetyl-gamma-glutamyl-phosphate reductase from Campylobacter jejuni subsp. jejuni serotype O:23/36 (strain 81-176).